We begin with the raw amino-acid sequence, 360 residues long: RNA demethylase ALKBH5 (360 aa).

A disordered region spans residues 1 to 53; sequence MSATYTDLREKLQSLNRDSPKEVRKRKQPASDTEEEDEAGSEPEAEEEEARKV. A compositionally biased stretch (basic and acidic residues) spans 7–22; the sequence is DLREKLQSLNRDSPKE. The segment covering 32–48 has biased composition (acidic residues); it reads DTEEEDEAGSEPEAEEE. Tyr-107 is an active-site residue. 5 residues coordinate 2-oxoglutarate: Asn-161, Tyr-163, His-172, His-234, and Arg-245. The cysteines at positions 198 and 235 are disulfide-linked. The tract at residues 261–360 is disordered; it reads EMKSLSSSYQ…PVRKVKMRRH (100 aa). Positions 264–280 are enriched in polar residues; sequence SLSSSYQPERLQGSNRQ. Residues 281–290 are compositionally biased toward basic residues; that stretch reads HILKPKRSHR. 2 stretches are compositionally biased toward basic and acidic residues: residues 291–312 and 330–340; these read KADPDAAHRPRILEMDKEENRR and YWRRSHDHVDT.

Belongs to the alkB family. As to quaternary structure, monomer. Requires Fe(2+) as cofactor.

Its subcellular location is the nucleus speckle. It catalyses the reaction an N(6)-methyladenosine in mRNA + 2-oxoglutarate + O2 = an adenosine in mRNA + formaldehyde + succinate + CO2. Its function is as follows. Dioxygenase that specifically demethylates N(6)-methyladenosine (m6A) RNA, the most prevalent internal modification of messenger RNA (mRNA) in higher eukaryotes. Demethylates RNA by oxidative demethylation, which requires molecular oxygen, alpha-ketoglutarate and iron. Demethylation of m6A mRNA affects mRNA processing, translation and export. In Xenopus laevis (African clawed frog), this protein is RNA demethylase ALKBH5 (alkbh5).